Here is a 261-residue protein sequence, read N- to C-terminus: MEKGKVVVLEDRVPKLKERRRQKANRRLIAYLSFFFLFILCVLYFQSPLGAVGHVEVSGNRHLTAERIISLSGITKRTSFWKVNEQNVEKKLTRHPEIKEATVEKQLPNTIAIHVREWRRIAYVYDRQTFFPLLENGRLLKQEGTKTAPSDAPVLVGWKDGDAIAEMTGQLAELPAAVLGAMSEIHYKPTREYEDRVIVYMNDGYEVSATIRQFADKLSHYPAIAAALDRNVKGVIHLEVGSYFVPYSPPKKEDGDETTSP.

Over 1-27 the chain is Cytoplasmic; it reads MEKGKVVVLEDRVPKLKERRRQKANRR. The chain crosses the membrane as a helical span at residues 28 to 48; sequence LIAYLSFFFLFILCVLYFQSP. Residues 47–117 are alpha; that stretch reads SPLGAVGHVE…PNTIAIHVRE (71 aa). At 49 to 261 the chain is on the extracellular side; sequence LGAVGHVEVS…KEDGDETTSP (213 aa). Residues 50–118 form the POTRA domain; sequence GAVGHVEVSG…NTIAIHVREW (69 aa). Positions 118 to 230 are beta; sequence WRRIAYVYDR…YPAIAAALDR (113 aa). Positions 231–260 are gamma; sequence NVKGVIHLEVGSYFVPYSPPKKEDGDETTS.

Belongs to the FtsQ/DivIB family. DivIB subfamily.

It is found in the cell membrane. Cell division protein that may be involved in stabilizing or promoting the assembly of the division complex. The sequence is that of Cell division protein DivIB from Geobacillus kaustophilus (strain HTA426).